The primary structure comprises 78 residues: Large ribosomal subunit protein bL28 (78 aa).

A disordered region spans residues 1 to 21 (MSRVCQVTGKSPITGNNVSHA). Residues 8–21 (TGKSPITGNNVSHA) are compositionally biased toward polar residues.

Belongs to the bacterial ribosomal protein bL28 family.

The polypeptide is Large ribosomal subunit protein bL28 (Hahella chejuensis (strain KCTC 2396)).